The following is a 293-amino-acid chain: Protease HtpX homolog (293 aa).

Transmembrane regions (helical) follow at residues 4-24 (VILF…TLRI) and 40-60 (ALLM…LLIS). His146 is a Zn(2+) binding site. The active site involves Glu147. His150 serves as a coordination point for Zn(2+). The next 2 membrane-spanning stretches (helical) occupy residues 161 to 181 (LIQG…GYFV) and 198 to 218 (VTVI…VAWF). Zn(2+) is bound at residue Glu223.

It belongs to the peptidase M48B family. The cofactor is Zn(2+).

The protein resides in the cell inner membrane. The polypeptide is Protease HtpX homolog (Bordetella avium (strain 197N)).